The following is a 492-amino-acid chain: Glutamyl-tRNA(Gln) amidotransferase subunit A (492 aa).

Active-site charge relay system residues include Lys-84 and Ser-159. Ser-183 serves as the catalytic Acyl-ester intermediate.

It belongs to the amidase family. GatA subfamily. In terms of assembly, heterotrimer of A, B and C subunits.

The catalysed reaction is L-glutamyl-tRNA(Gln) + L-glutamine + ATP + H2O = L-glutaminyl-tRNA(Gln) + L-glutamate + ADP + phosphate + H(+). Allows the formation of correctly charged Gln-tRNA(Gln) through the transamidation of misacylated Glu-tRNA(Gln) in organisms which lack glutaminyl-tRNA synthetase. The reaction takes place in the presence of glutamine and ATP through an activated gamma-phospho-Glu-tRNA(Gln). The polypeptide is Glutamyl-tRNA(Gln) amidotransferase subunit A (Anaeromyxobacter sp. (strain K)).